Reading from the N-terminus, the 115-residue chain is MAGFGLPNFGQITEAFKKAQQIQQDAQKLQEELDDMELEGTNEDGRVTVWLSGNQQPIRVKVENSILKEEEEIVEAAILEAMQKAHEISTSNMKSRMQELTGGLNLNLPGINDDN.

The protein belongs to the YbaB/EbfC family. In terms of assembly, homodimer.

It localises to the cytoplasm. Its subcellular location is the nucleoid. In terms of biological role, binds to DNA and alters its conformation. May be involved in regulation of gene expression, nucleoid organization and DNA protection. The chain is Nucleoid-associated protein Pro_0020 from Prochlorococcus marinus (strain SARG / CCMP1375 / SS120).